The following is a 167-amino-acid chain: Novel acetylcholine receptor chaperone (167 aa).

Topologically, residues 1-5 are cytoplasmic; sequence MASPR. The helical transmembrane segment at 6-26 threads the bilayer; sequence TITIMALSVALGLFFVFMGTI. Topologically, residues 27 to 61 are lumenal; that stretch reads KLTPRLSKDAYSEMKRAYKSYVRALPLLKKMGINS. The interaction with NGFR stretch occupies residues 43–54; it reads AYKSYVRALPLL. A helical transmembrane segment spans residues 62-82; it reads ILLRKSIGALEVACGIVMTLV. Residues 83–88 lie on the Cytoplasmic side of the membrane; that stretch reads PGRPKD. A helical membrane pass occupies residues 89–109; sequence VANFFLLLLVLAVLFFHQLVG. Residues 110–114 lie on the Lumenal side of the membrane; it reads DPLKR. A helical membrane pass occupies residues 115-132; that stretch reads YAHALVFGILLTCRLLIA. Over 133–167 the chain is Cytoplasmic; sequence RKPEDRSSEKKALPESAEEQPSLYEKAPQGKVKVS. Residues 135–145 show a composition bias toward basic and acidic residues; it reads PEDRSSEKKAL. Residues 135 to 167 form a disordered region; it reads PEDRSSEKKALPESAEEQPSLYEKAPQGKVKVS.

It belongs to the DoxX family. As to quaternary structure, may interact with NGFR. Interacts with RPN1, RPN2 and CANX. As to expression, brain (at protein level). Expressed in the spinal cord dorsal horn (at protein level).

It localises to the peroxisome membrane. The protein resides in the cytoplasmic vesicle. It is found in the endoplasmic reticulum membrane. In terms of biological role, molecular chaperone which mediates the proper assembly and functional expression of the nicotinic acetylcholine receptors (nAChRs) throughout the brain. Essential for the proper folding, assembly, function and surface trafficking of alpha-7 (CHRNA7), alpha-4-beta-2, alpha-3-beta-2 and alpha-3-beta-4 receptors. Stably associates with ribophorin-1 (RPN1) and ribophorin-2 (RPN2) (components of the oligosaccharyl transferase (OST) complex) and with calnexin (CANX), both of which are critical for NACHO-mediated effects on CHRNA7 assembly and function. Facilitates the proper folding and assembly of alpha-6-beta-2 and alpha-6-beta-2-beta-3 receptors and acts at early stages of the nAChRs subunit assembly. Promotes the expression of the alpha-4(2):beta-2(3) stoichiometric form over the alpha-4(3):beta-2(2) form. This chain is Novel acetylcholine receptor chaperone, found in Mus musculus (Mouse).